Reading from the N-terminus, the 316-residue chain is Fe-S cluster assembly protein DRE2 (316 aa).

The segment at 4–156 is N-terminal SAM-like domain; sequence SMPVATTVAA…KPQHVASTSV (153 aa). The linker stretch occupies residues 157 to 202; sequence PLKSRQPGALLNRKKTDPAKKQALWALSSPSTPKIDPEALLTAEDK. 4 residues coordinate [2Fe-2S] cluster: cysteine 209, cysteine 223, cysteine 226, and cysteine 228. The interval 209–228 is fe-S binding site A; it reads CEPVRSSAPRRKKACKSCSC. [4Fe-4S] cluster is bound by residues cysteine 279, cysteine 282, cysteine 290, and cysteine 293. 2 consecutive short sequence motifs (cx2C motif) follow at residues 279–282 and 290–293; these read CGSC and CAGC. A fe-S binding site B region spans residues 279-293; sequence CGSCFLGDAFRCAGC.

This sequence belongs to the anamorsin family. As to quaternary structure, monomer. Interacts with TAH18. Interacts with MIA40. The cofactor is [2Fe-2S] cluster. Requires [4Fe-4S] cluster as cofactor.

The protein resides in the cytoplasm. Its subcellular location is the mitochondrion intermembrane space. Functionally, component of the cytosolic iron-sulfur (Fe-S) protein assembly (CIA) machinery required for the maturation of extramitochondrial Fe-S proteins. Part of an electron transfer chain functioning in an early step of cytosolic Fe-S biogenesis, facilitating the de novo assembly of a [4Fe-4S] cluster on the scaffold complex CFD1-NBP35. Electrons are transferred to DRE2 from NADPH via the FAD- and FMN-containing protein TAH18. TAH18-DRE2 are also required for the assembly of the diferric tyrosyl radical cofactor of ribonucleotide reductase (RNR), probably by providing electrons for reduction during radical cofactor maturation in the catalytic small subunit RNR2. The sequence is that of Fe-S cluster assembly protein DRE2 from Laccaria bicolor (strain S238N-H82 / ATCC MYA-4686) (Bicoloured deceiver).